Reading from the N-terminus, the 143-residue chain is Large ribosomal subunit protein uL16 (143 aa).

The disordered stretch occupies residues 1-26 (MSMALLPRRVKYRKSQRGSRKGNATR). Residues 8–20 (RRVKYRKSQRGSR) show a composition bias toward basic residues.

It belongs to the universal ribosomal protein uL16 family. In terms of assembly, part of the 50S ribosomal subunit.

Its function is as follows. Binds 23S rRNA and is also seen to make contacts with the A and possibly P site tRNAs. The sequence is that of Large ribosomal subunit protein uL16 from Methylacidiphilum infernorum (isolate V4) (Methylokorus infernorum (strain V4)).